Consider the following 288-residue polypeptide: Peptidyl-tRNA hydrolase, chloroplastic (288 aa).

The transit peptide at 1–55 directs the protein to the chloroplast; sequence MKAVAFPAKIANLSFPSNCCSLFFRSPATFLSPALPCRKLTKGIRGLEGLMSQCL. Tyrosine 107 provides a ligand contact to tRNA. The Proton acceptor role is filled by histidine 112. TRNA is bound by residues phenylalanine 157, asparagine 159, and asparagine 205.

Belongs to the PTH family. As to quaternary structure, monomer.

It is found in the plastid. The protein resides in the chloroplast stroma. The enzyme catalyses an N-acyl-L-alpha-aminoacyl-tRNA + H2O = an N-acyl-L-amino acid + a tRNA + H(+). The natural substrate for this enzyme may be peptidyl-tRNAs which drop off the ribosome during protein synthesis. The polypeptide is Peptidyl-tRNA hydrolase, chloroplastic (Arabidopsis thaliana (Mouse-ear cress)).